Here is a 428-residue protein sequence, read N- to C-terminus: Serine--tRNA ligase (428 aa).

Position 231 to 233 (231 to 233 (TAE)) interacts with L-serine. ATP contacts are provided by residues 262-264 (RRE) and Val278. Glu285 provides a ligand contact to L-serine. 349–352 (EVSS) lines the ATP pocket. Ser384 lines the L-serine pocket.

The protein belongs to the class-II aminoacyl-tRNA synthetase family. Type-1 seryl-tRNA synthetase subfamily. In terms of assembly, homodimer. The tRNA molecule binds across the dimer.

The protein resides in the cytoplasm. It carries out the reaction tRNA(Ser) + L-serine + ATP = L-seryl-tRNA(Ser) + AMP + diphosphate + H(+). It catalyses the reaction tRNA(Sec) + L-serine + ATP = L-seryl-tRNA(Sec) + AMP + diphosphate + H(+). It participates in aminoacyl-tRNA biosynthesis; selenocysteinyl-tRNA(Sec) biosynthesis; L-seryl-tRNA(Sec) from L-serine and tRNA(Sec): step 1/1. Its function is as follows. Catalyzes the attachment of serine to tRNA(Ser). Is also able to aminoacylate tRNA(Sec) with serine, to form the misacylated tRNA L-seryl-tRNA(Sec), which will be further converted into selenocysteinyl-tRNA(Sec). This chain is Serine--tRNA ligase, found in Chlamydia muridarum (strain MoPn / Nigg).